Reading from the N-terminus, the 501-residue chain is Lysine--tRNA ligase (501 aa).

Residues glutamate 411 and glutamate 418 each coordinate Mg(2+).

This sequence belongs to the class-II aminoacyl-tRNA synthetase family. In terms of assembly, homodimer. It depends on Mg(2+) as a cofactor.

It localises to the cytoplasm. The catalysed reaction is tRNA(Lys) + L-lysine + ATP = L-lysyl-tRNA(Lys) + AMP + diphosphate. This Clostridium perfringens (strain ATCC 13124 / DSM 756 / JCM 1290 / NCIMB 6125 / NCTC 8237 / Type A) protein is Lysine--tRNA ligase.